Consider the following 212-residue polypeptide: Thymidylate kinase (212 aa).

13–20 (GLEGAGKS) is an ATP binding site.

Belongs to the thymidylate kinase family.

It carries out the reaction dTMP + ATP = dTDP + ADP. Its function is as follows. Phosphorylation of dTMP to form dTDP in both de novo and salvage pathways of dTTP synthesis. In Legionella pneumophila (strain Paris), this protein is Thymidylate kinase.